A 351-amino-acid chain; its full sequence is Nuclear inhibitor of protein phosphatase 1 (351 aa).

Positions 1–142 (MAAAANSGSS…LPSAVKGDEK (142 aa)) are interaction with CDC5L, SF3B1 and MELK. The 53-residue stretch at 49 to 101 (YLFGRNPDLCDFTIDHQSCSRVHAALVYHKHLKRVFLIDLNSTHGTFLGHIRL) folds into the FHA domain. The tract at residues 143–224 (MGGEDDELKG…VDPSVGRFRN (82 aa)) is interaction with EED. Position 161 is a phosphothreonine; by CK2; in vitro (Thr161). The residue at position 178 (Ser178) is a Phosphoserine; by PKA; in vitro. Short sequence motifs (nuclear localization signal) lie at residues 185-209 (GNLDIQRPKRKRKNSRVTFSEDDEI) and 210-240 (INPEDVDPSVGRFRNMVQTAVVPVKKKRVEG). An involved in PP-1 inhibition region spans residues 191–200 (RPKRKRKNSR). Residue Ser199 is modified to Phosphoserine. Residues 200-203 (RVTF) form an involved in PP-1 binding region. Ser204 carries the post-translational modification Phosphoserine. Position 249 is a phosphoserine (Ser249). Phosphotyrosine is present on Tyr264. The interval 310 to 329 (AVNMNPAPNPAVYNPEAVNE) is interaction with EED. A disordered region spans residues 316 to 351 (APNPAVYNPEAVNEPKKKKYAKEAWPGKKPTPSLLI). The RNA-binding stretch occupies residues 330–351 (PKKKKYAKEAWPGKKPTPSLLI). The involved in PP-1 inhibition stretch occupies residues 331 to 337 (KKKKYAK). Position 335 is a phosphotyrosine (Tyr335).

In terms of assembly, interacts with phosphorylated CDC5L, SF3B1 and MELK. Interacts with EED. Part of a complex consisting of PPP1R8, EED, HDAC2 and PP-1. Part of the spliceosome. Interacts with PPP1CA, PPP1CB and PPP1CC. Post-translationally, the N-terminus is blocked. In terms of processing, inactivated by phosphorylation on Ser-199 or Ser-204.

The protein localises to the nucleus. It is found in the nucleus speckle. In terms of biological role, inhibitor subunit of the major nuclear protein phosphatase-1 (PP-1). It has RNA-binding activity but does not cleave RNA and may target PP-1 to RNA-associated substrates. May also be involved in pre-mRNA splicing. Binds DNA and might act as a transcriptional repressor. Seems to be required for cell proliferation. The protein is Nuclear inhibitor of protein phosphatase 1 (PPP1R8) of Bos taurus (Bovine).